The following is a 349-amino-acid chain: Probable arabinogalactan endo-beta-1,4-galactanase A (349 aa).

The signal sequence occupies residues 1–15 (MLLSFLPLLPLATAA). Residue asparagine 126 is glycosylated (N-linked (GlcNAc...) asparagine). Glutamate 150 acts as the Proton donor in catalysis. The Nucleophile role is filled by glutamate 261.

Belongs to the glycosyl hydrolase 53 family.

It is found in the secreted. The catalysed reaction is The enzyme specifically hydrolyzes (1-&gt;4)-beta-D-galactosidic linkages in type I arabinogalactans.. Its function is as follows. Endogalactanase involved in the degradation of plant cell wall polysaccharides, and more particularly of hairy regions of pectin. The sequence is that of Probable arabinogalactan endo-beta-1,4-galactanase A (galA) from Aspergillus terreus (strain NIH 2624 / FGSC A1156).